The following is an 88-amino-acid chain: Small ribosomal subunit protein bS20 (88 aa).

This sequence belongs to the bacterial ribosomal protein bS20 family.

Binds directly to 16S ribosomal RNA. This is Small ribosomal subunit protein bS20 from Clostridium botulinum (strain 657 / Type Ba4).